The primary structure comprises 166 residues: PTS system glucose-specific EIIA component (166 aa).

The region spanning 36-140 (DVVFSEKIVG…SVLTPIVISN (105 aa)) is the PTS EIIA type-1 domain. The Zn(2+) site is built by histidine 73 and histidine 88. The Tele-phosphohistidine intermediate; for EIIA activity role is filled by histidine 88. Position 88 is a phosphohistidine; by HPr (histidine 88).

In terms of assembly, heterodimer with glycerol kinase (glpk). Zn(2+) is required as a cofactor.

The protein localises to the cytoplasm. In terms of biological role, the phosphoenolpyruvate-dependent sugar phosphotransferase system (sugar PTS), a major carbohydrate active transport system, catalyzes the phosphorylation of incoming sugar substrates concomitantly with their translocation across the cell membrane. The enzyme II complex composed of PtsG and Crr is involved in glucose transport. The polypeptide is PTS system glucose-specific EIIA component (crr) (Haemophilus influenzae (strain ATCC 51907 / DSM 11121 / KW20 / Rd)).